Here is a 386-residue protein sequence, read N- to C-terminus: Succinate--CoA ligase [ADP-forming] subunit beta (386 aa).

The 236-residue stretch at 9–244 folds into the ATP-grasp domain; that stretch reads KAVLRSYGVS…LDEEDSKEIE (236 aa). Residues lysine 46, 53–55, glutamate 99, cysteine 102, and glutamate 107 contribute to the ATP site; that span reads GRG. Asparagine 199 and aspartate 213 together coordinate Mg(2+). Residues asparagine 264 and 321–323 contribute to the substrate site; that span reads GIM.

It belongs to the succinate/malate CoA ligase beta subunit family. In terms of assembly, heterotetramer of two alpha and two beta subunits. It depends on Mg(2+) as a cofactor.

The catalysed reaction is succinate + ATP + CoA = succinyl-CoA + ADP + phosphate. The enzyme catalyses GTP + succinate + CoA = succinyl-CoA + GDP + phosphate. Its pathway is carbohydrate metabolism; tricarboxylic acid cycle; succinate from succinyl-CoA (ligase route): step 1/1. Succinyl-CoA synthetase functions in the citric acid cycle (TCA), coupling the hydrolysis of succinyl-CoA to the synthesis of either ATP or GTP and thus represents the only step of substrate-level phosphorylation in the TCA. The beta subunit provides nucleotide specificity of the enzyme and binds the substrate succinate, while the binding sites for coenzyme A and phosphate are found in the alpha subunit. This is Succinate--CoA ligase [ADP-forming] subunit beta from Bacillus cereus (strain B4264).